Consider the following 647-residue polypeptide: DNA mismatch repair protein MutL (647 aa).

Disordered stretches follow at residues 356–391 (EGSQ…SSIS) and 407–428 (PRPQ…EALP). Polar residues predominate over residues 413 to 423 (LRPQYQGSVTS).

Belongs to the DNA mismatch repair MutL/HexB family.

This protein is involved in the repair of mismatches in DNA. It is required for dam-dependent methyl-directed DNA mismatch repair. May act as a 'molecular matchmaker', a protein that promotes the formation of a stable complex between two or more DNA-binding proteins in an ATP-dependent manner without itself being part of a final effector complex. The polypeptide is DNA mismatch repair protein MutL (Citrifermentans bemidjiense (strain ATCC BAA-1014 / DSM 16622 / JCM 12645 / Bem) (Geobacter bemidjiensis)).